We begin with the raw amino-acid sequence, 95 residues long: MRKYEVMYIIRPNIDEESKKAVIERFNNVLTSNGAEITGTKDWGKRRLAYEINDFRDGFYQIVNVQSDAAAVQEFDRLAKISDDIIRHIVVKEEE.

Belongs to the bacterial ribosomal protein bS6 family. As to quaternary structure, part of the 30S ribosomal subunit.

Binds together with bS18 to 16S ribosomal RNA. The sequence is that of Small ribosomal subunit protein bS6 (rpsF) from Bacillus subtilis (strain 168).